Consider the following 271-residue polypeptide: Putative phosphoenolpyruvate synthase regulatory protein (271 aa).

Position 151–158 (151–158) interacts with ADP; that stretch reads GVSRSGKT.

It belongs to the pyruvate, phosphate/water dikinase regulatory protein family. PSRP subfamily.

It carries out the reaction [pyruvate, water dikinase] + ADP = [pyruvate, water dikinase]-phosphate + AMP + H(+). It catalyses the reaction [pyruvate, water dikinase]-phosphate + phosphate + H(+) = [pyruvate, water dikinase] + diphosphate. Its function is as follows. Bifunctional serine/threonine kinase and phosphorylase involved in the regulation of the phosphoenolpyruvate synthase (PEPS) by catalyzing its phosphorylation/dephosphorylation. The polypeptide is Putative phosphoenolpyruvate synthase regulatory protein (Burkholderia mallei (strain NCTC 10247)).